Reading from the N-terminus, the 858-residue chain is Beta-galactosidase 6 (858 aa).

Residues 1-30 (MAAATVGVLLRLLLLPVVVVVSLLVGASRA) form the signal peptide. An N-linked (GlcNAc...) asparagine glycan is attached at Asn32. Glu189 functions as the Proton donor in the catalytic mechanism. The active-site Nucleophile is Glu258. Residues Asn259, Asn482, Asn507, Asn595, and Asn830 are each glycosylated (N-linked (GlcNAc...) asparagine). Residues 772 to 858 (QTQGPALRLE…KSLVVEAACS (87 aa)) form the SUEL-type lectin domain.

It belongs to the glycosyl hydrolase 35 family.

It is found in the secreted. It localises to the extracellular space. The protein resides in the apoplast. It catalyses the reaction Hydrolysis of terminal non-reducing beta-D-galactose residues in beta-D-galactosides.. Functionally, releases galactose by hydrolysis of plant cell wall galactose-containing polysaccharides such as galacto-xyloglucan, pectic galactan and galactan (in vitro). The protein is Beta-galactosidase 6 of Oryza sativa subsp. japonica (Rice).